We begin with the raw amino-acid sequence, 301 residues long: Acidic endochitinase (301 aa).

A signal peptide spans 1–25 (MARTPQSTPLLISLSVLALLQTSYA). Positions 26 to 301 (GGIAIYWGQN…GYSSSIKSSV (276 aa)) constitute a GH18 domain. 2 disulfides stabilise this stretch: C45/C92 and C75/C82. E152 functions as the Proton donor in the catalytic mechanism. The cysteines at positions 187 and 216 are disulfide-linked.

Belongs to the glycosyl hydrolase 18 family. Chitinase class II subfamily.

The catalysed reaction is Random endo-hydrolysis of N-acetyl-beta-D-glucosaminide (1-&gt;4)-beta-linkages in chitin and chitodextrins.. In terms of biological role, defense against chitin containing fungal pathogens. The polypeptide is Acidic endochitinase (CHIT3) (Vitis vinifera (Grape)).